Reading from the N-terminus, the 307-residue chain is Sporulation sigma-E factor-processing peptidase (307 aa).

Helical transmembrane passes span 7–27 (LIWM…AVVL), 36–56 (LLLG…PFSH), 57–77 (LMVH…MTFG), 89–109 (LTFY…HFLF), and 127–147 (FGDP…SYFS). Asp183 is a catalytic residue.

The protein belongs to the peptidase U4 family. Self-associates. Interacts with SigE. Interacts with SpoIIR.

It is found in the cell membrane. In terms of biological role, probable aspartic protease that is responsible for the proteolytic cleavage of the RNA polymerase sigma E factor (SigE/spoIIGB) to yield the active peptide in the mother cell during sporulation. Responds to a signal from the forespore that is triggered by the extracellular signal protein SpoIIR. The sequence is that of Sporulation sigma-E factor-processing peptidase from Priestia megaterium (strain ATCC 12872 / QMB1551) (Bacillus megaterium).